The following is a 209-amino-acid chain: MKKAILGKKLGMTQIFNENGKVIPVTVIEAGPCTVIQKKTVEKDGYEAIQVAFGDIREKLRNKPVKGHFAKAGVSVKRHIKEFKLEDSNSLEIGQEIKADVFEAGERVDISGVSKGKGFQGTIRRWNAHRGPMSHGSKFHRAVGSMGASSDPSRTFKNKRMPGHMGNVNTTVLNLEVVKIIPEKNLILIKGGVPGPNKGLVQIRNTVKA.

Belongs to the universal ribosomal protein uL3 family. As to quaternary structure, part of the 50S ribosomal subunit. Forms a cluster with proteins L14 and L19.

One of the primary rRNA binding proteins, it binds directly near the 3'-end of the 23S rRNA, where it nucleates assembly of the 50S subunit. This chain is Large ribosomal subunit protein uL3, found in Clostridium botulinum (strain Okra / Type B1).